The following is a 1381-amino-acid chain: Regulator of G-protein signaling 12 (1381 aa).

The PDZ domain occupies 21-98 (SVEVARGRAG…VLHMVIAEGT (78 aa)). 2 positions are modified to phosphoserine: serine 171 and serine 194. Lysine 195 is covalently cross-linked (Glycyl lysine isopeptide (Lys-Gly) (interchain with G-Cter in SUMO2)). The 168-residue stretch at 223–390 (SILNVAMVVG…VLQFISVLYR (168 aa)) folds into the PID domain. Disordered regions lie at residues 409–428 (ADAHQNNSTSSNSDSGIGNF), 442–528 (LGGG…GAAG), and 620–644 (RKTKEDKKSSKLGRGVALAQTSQRT). The span at 412-428 (HQNNSTSSNSDSGIGNF) shows a compositional bias: polar residues. Residues arginine 524 and arginine 633 each carry the omega-N-methylarginine modification. Serine 661 and serine 671 each carry phosphoserine. The RGS domain maps to 715-832 (SFERLLQDPV…LKSQLYQECV (118 aa)). Residues 842–942 (PDSQQVPSSP…ESQGSVSSAG (101 aa)) form a disordered region. Residues 849–869 (SSPASKHSISSDHSNVSTPKK) show a composition bias toward low complexity. Residues serine 850 and serine 879 each carry the phosphoserine modification. The span at 914 to 923 (DHGDHAHDAP) shows a compositional bias: basic and acidic residues. A Phosphoserine modification is found at serine 943. 2 consecutive RBD domains span residues 962 to 1032 (KHCC…LEKR) and 1034 to 1104 (LFRL…LEER). The segment covering 1102 to 1117 (EERDPSRGKVSTDKQK) has biased composition (basic and acidic residues). Residues 1102-1169 (EERDPSRGKV…RDPRLSKREE (68 aa)) are disordered. The span at 1122-1132 (KQNSAVNSSPR) shows a compositional bias: polar residues. Residues 1151 to 1169 (IRGENGKSARDPRLSKREE) are compositionally biased toward basic and acidic residues. Positions 1187-1209 (AEEFFELISKAQSNRADDQRGLL) constitute a GoLoco domain. Disordered regions lie at residues 1227 to 1318 (SELA…QEGT) and 1347 to 1381 (LMGEGDISSPNSTLLPPPPTPQDTPGPPRPGTSRF). The span at 1261-1280 (SDSPATSPASAQSPCSAYSP) shows a compositional bias: low complexity. A compositionally biased stretch (pro residues) spans 1361 to 1381 (LPPPPTPQDTPGPPRPGTSRF).

In terms of assembly, interacts with GNAI1, GNAI2 and GNAI3; the interactions are GDP-dependent. In terms of tissue distribution, expressed in brain.

Its subcellular location is the nucleus. It is found in the cytoplasm. It localises to the cell projection. The protein localises to the dendrite. The protein resides in the synapse. Functionally, regulates G protein-coupled receptor signaling cascades. Inhibits signal transduction by increasing the GTPase activity of G protein alpha subunits, thereby driving them into their inactive GDP-bound form. The polypeptide is Regulator of G-protein signaling 12 (Rgs12) (Mus musculus (Mouse)).